Here is a 461-residue protein sequence, read N- to C-terminus: BSD domain-containing protein 1 (461 aa).

Residues serine 123 and serine 197 each carry the phosphoserine modification. The 53-residue stretch at 177–229 (WLSQFCLEEKKGEISELLVGSPSIRALYTKMVPAAVSHSEFWHRYFYKVHQLE) folds into the BSD domain. The interval 239–384 (KQRAEQSISE…SGPEPRPPAR (146 aa)) is disordered. The span at 250-259 (PGWEEEEEEL) shows a compositional bias: acidic residues. A compositionally biased stretch (low complexity) spans 295-318 (LVTPVEPPTEVTPSESSESVSLVT). Residue threonine 387 is modified to Phosphothreonine. Residues 398-430 (VFELNSDSGKSTPSNNGKKGSSTDISEDWEKDF) form a disordered region. A compositionally biased stretch (polar residues) spans 402–421 (NSDSGKSTPSNNGKKGSSTD). Phosphoserine is present on residues serine 418, serine 419, and serine 449.

The sequence is that of BSD domain-containing protein 1 (BSDC1) from Bos taurus (Bovine).